Consider the following 209-residue polypeptide: Large ribosomal subunit protein bL21m (209 aa).

The transit peptide at 1 to 43 (MAAAIAASALPGAFGRLVSVCSRSILASQGSGSASLWSASRRF) directs the protein to the mitochondrion.

The protein belongs to the bacterial ribosomal protein bL21 family. As to quaternary structure, component of the mitochondrial ribosome large subunit (39S) which comprises a 16S rRNA and about 50 distinct proteins.

Its subcellular location is the mitochondrion. The polypeptide is Large ribosomal subunit protein bL21m (Mrpl21) (Mus musculus (Mouse)).